An 853-amino-acid polypeptide reads, in one-letter code: MLSLGKNGKTSSTLVRNARRSVIMPASRDVRSRKRRARSVTDTKDVLDLDSIDFTNEKEVQFKVNQLKEFTRNLREQIKYTDELKRKHVIEEEETKSVDPEMHDFDSDAGVILSSLNDKVAGPGAEQNLSTLLLSDKADTSLLPERLSERIKDKDLILRCLFDKRNRDFNPIVTELYHSEQRLKGLGIQFIYSKILSKFDKLSFTSLSQLDEMIMESVGNDSSRLNGNLYEHLMLSFSRVTSPSAQGKLEVCGKLRELTERMDATLSKKSFQPTQYMLNACIFAASKAMSWEYMDFFLKKFTSTYDMQPNRKNYTTVISFYTKMEHYKKAWQLFDSLKFLSLEHKPDTKVYNLMLEVCQKEKNYARSLDIFQEMDDLNVTKDLKTYLNAAKSLALSSADNVTSEGKADSLRLMSWKYIHKIHDDPKLSKQLTENPRNNMLLLETMMVLSAYDGDVGFARALYYKYTNALFKAHFYEFKKYHKDTDPVDYIRIWKKSLSAQMFNWLMLSYSKFKKSRLPVLLGYPEGSSLRRSMIYSVDYSGRDSSYENSNIQLPMLPMTELNDAELTINESKALWRFNLEFGGNYDIRELPEGMQTVKDIENIVKCAKTVNEFKLQISQRLLEWKNRYVNHKILNMKSLITFLTIPIRLHEPNEFKLRLQEFTFQAFEFNERVEYQFKKSKTNELESPVLSKDFNTTDSNALVDNGIIPSEFLLYLVSMKHKLATNCAIYEVSMKAAIAFHDYELAMTTWKNRGKFRMTDAFQKLTPGERQQSDATFAQLMVEYFTNEKMYQDALSIILSSLKTVNWQYSMVKSLHRALLAIEDENSAARLLSVVNRKSKIVELEEEIKSLDL.

The N-terminal 25 residues, 1–25 (MLSLGKNGKTSSTLVRNARRSVIMP), are a transit peptide targeting the mitochondrion. PPR repeat units lie at residues 310–344 (NRKNYTTVISFYTKMEHYKKAWQLFDSLKFLSLEH) and 347–381 (DTKVYNLMLEVCQKEKNYARSLDIFQEMDDLNVTK).

The protein belongs to the CCM1 family. Binds to mitochondrial small subunit 15S rRNA.

It localises to the mitochondrion. Functionally, regulates mitochondrial small subunit maturation by controlling 15S rRNA 5'-end processing. Localizes to the 5' precursor of the 15S rRNA in a position that is subsequently occupied by mS47 in the mature yeast mtSSU. Uses structure and sequence-specific RNA recognition, binding to a single-stranded region of the precursor and specifically recognizing bases -6 to -1. The exchange of Ccm1 for mS47 is coupled to the irreversible removal of precursor rRNA that is accompanied by conformational changes of the mitoribosomal proteins uS5m and mS26. These conformational changes signal completion of 5'-end rRNA processing through protection of the mature 5'-end of the 15S rRNA and stabilization of mS47. The removal of the 5' precursor together with the dissociation of Ccm1 may be catalyzed by the 5'-3' exoribonuclease Pet127. Involved in the specific removal of group I introns in mitochondrial encoded transcripts. The polypeptide is Mitochondrial 15S rRNA processing factor CCM1 (CCM1) (Kluyveromyces lactis (strain ATCC 8585 / CBS 2359 / DSM 70799 / NBRC 1267 / NRRL Y-1140 / WM37) (Yeast)).